We begin with the raw amino-acid sequence, 341 residues long: MKLRSECLPKSEHGTVLYTLSQLPDFPPCKDQDYSHEDLLQTAETFLKSRIKEGDVQANFLLGQLFFEEGWYEDALLQFEKVKDEDNQALYQAGVMYYDGLGTQEDHRKGVKYMERIVTSDCPSAKHLKYAAAYNLGRAYFEGYGIPHSDKEAERWWLFAADNGNPKASLKAQSVLGMYYSSPPNVDLQKAFLWHSEACGNGSLESQGALGVMYLYGNGIKKNVQAAIECLKEAAERGNVYAQGHLVSCYYQRKLYTKAVELAKKIVSHDNIELLVNTTDCLPSYTVKGVAIATFYFARCLHLGLGIKQDSTAAKQLYSKAAQLDAQVAAELNFDIIYGKI.

A TPR repeat occupies Val56 to Ala89. Sel1-like repeat units lie at residues Leu90–Cys122, Tyr130–Asn165, Leu170–Ser203, Leu204–Asn239, Val240–Asn271, and Ala291–Ala326.

The protein resides in the cytoplasm. In terms of biological role, may act as an adapter that regulates LRP2 function. This chain is LRP2-binding protein (lrp2bp), found in Xenopus laevis (African clawed frog).